The following is a 275-amino-acid chain: tRNA (guanine-N(1)-)-methyltransferase (275 aa).

Residues G139 and 159-164 contribute to the S-adenosyl-L-methionine site; that span reads IGDYIL.

Belongs to the RNA methyltransferase TrmD family. In terms of assembly, homodimer.

The protein resides in the cytoplasm. It carries out the reaction guanosine(37) in tRNA + S-adenosyl-L-methionine = N(1)-methylguanosine(37) in tRNA + S-adenosyl-L-homocysteine + H(+). Its function is as follows. Specifically methylates guanosine-37 in various tRNAs. The chain is tRNA (guanine-N(1)-)-methyltransferase from Lachnoclostridium phytofermentans (strain ATCC 700394 / DSM 18823 / ISDg) (Clostridium phytofermentans).